Here is a 54-residue protein sequence, read N- to C-terminus: ATP synthase protein 8 (54 aa).

A helical membrane pass occupies residues 9–25 (WVFLFFLVWLVLGFLGL).

The protein belongs to the ATPase protein 8 family. F-type ATPases have 2 components, CF(1) - the catalytic core - and CF(0) - the membrane proton channel.

Its subcellular location is the mitochondrion membrane. Its function is as follows. Mitochondrial membrane ATP synthase (F(1)F(0) ATP synthase or Complex V) produces ATP from ADP in the presence of a proton gradient across the membrane which is generated by electron transport complexes of the respiratory chain. F-type ATPases consist of two structural domains, F(1) - containing the extramembraneous catalytic core and F(0) - containing the membrane proton channel, linked together by a central stalk and a peripheral stalk. During catalysis, ATP synthesis in the catalytic domain of F(1) is coupled via a rotary mechanism of the central stalk subunits to proton translocation. Part of the complex F(0) domain. Minor subunit located with subunit a in the membrane. The protein is ATP synthase protein 8 (MTATP8) of Branchiostoma floridae (Florida lancelet).